Reading from the N-terminus, the 86-residue chain is Omega-theraphotoxin-Hhn1e (86 aa).

The first 21 residues, 1–21 (MKSIVFVALFGLALLAVVCSA), serve as a signal peptide directing secretion. The propeptide occupies 22–50 (SEGAHKELLKEVVRAMVVDKTDAVQAEER). 2 disulfides stabilise this stretch: cysteine 52/cysteine 66 and cysteine 65/cysteine 78.

It belongs to the neurotoxin 10 (Hwtx-1) family. 17 (Hntx-9) subfamily. Expressed by the venom gland.

The protein localises to the secreted. Ion channel inhibitor. The protein is Omega-theraphotoxin-Hhn1e of Cyriopagopus hainanus (Chinese bird spider).